A 475-amino-acid polypeptide reads, in one-letter code: Ribulose bisphosphate carboxylase large chain (475 aa).

Positions 1–2 (MA) are excised as a propeptide. Position 3 is an N-acetylproline (P3). The residue at position 14 (K14) is an N6,N6,N6-trimethyllysine. Positions 123 and 173 each coordinate substrate. K175 acts as the Proton acceptor in catalysis. Position 177 (K177) interacts with substrate. 3 residues coordinate Mg(2+): K201, D203, and E204. K201 is subject to N6-carboxylysine. Catalysis depends on H294, which acts as the Proton acceptor. 3 residues coordinate substrate: R295, H327, and S379.

This sequence belongs to the RuBisCO large chain family. Type I subfamily. As to quaternary structure, heterohexadecamer of 8 large chains and 8 small chains; disulfide-linked. The disulfide link is formed within the large subunit homodimers. It depends on Mg(2+) as a cofactor. In terms of processing, the disulfide bond which can form in the large chain dimeric partners within the hexadecamer appears to be associated with oxidative stress and protein turnover.

Its subcellular location is the plastid. The protein localises to the chloroplast. It carries out the reaction 2 (2R)-3-phosphoglycerate + 2 H(+) = D-ribulose 1,5-bisphosphate + CO2 + H2O. The enzyme catalyses D-ribulose 1,5-bisphosphate + O2 = 2-phosphoglycolate + (2R)-3-phosphoglycerate + 2 H(+). Its function is as follows. RuBisCO catalyzes two reactions: the carboxylation of D-ribulose 1,5-bisphosphate, the primary event in carbon dioxide fixation, as well as the oxidative fragmentation of the pentose substrate in the photorespiration process. Both reactions occur simultaneously and in competition at the same active site. This chain is Ribulose bisphosphate carboxylase large chain, found in Bryopsis maxima (Green alga).